A 461-amino-acid chain; its full sequence is Argininosuccinate lyase (461 aa).

This sequence belongs to the lyase 1 family. Argininosuccinate lyase subfamily.

It is found in the cytoplasm. The enzyme catalyses 2-(N(omega)-L-arginino)succinate = fumarate + L-arginine. It functions in the pathway amino-acid biosynthesis; L-arginine biosynthesis; L-arginine from L-ornithine and carbamoyl phosphate: step 3/3. The sequence is that of Argininosuccinate lyase from Streptococcus thermophilus (strain CNRZ 1066).